A 391-amino-acid polypeptide reads, in one-letter code: Na(+)/H(+) antiporter NhaA (391 aa).

Helical transmembrane passes span 14 to 34 (AGGILLVIAAAIAMTIANSPL), 47 to 67 (FGMSVSHWINDGLMAVFFLLI), 87 to 107 (IFPAIAAVGGMLAPALIYVAF), 117 to 137 (GWAIPAATDIAFALGIMALLG), 146 to 166 (VFLLALAIIDDLGVVVIIALF), 171 to 191 (LSTMALLVGFAMTGVLFMLNA), 205 to 225 (AILWFAVLKSGVHATLAGVVI), 252 to 272 (VAFGILPLFAFANAGISLEGV), 280 to 300 (MLPLGIALGLLVGKPLGIFTF), 318 to 338 (FIHIFAVSVLCGIGFTMSIFI), and 356 to 376 (LGILMGSTTAAIIGYVLLHFS).

The protein belongs to the NhaA Na(+)/H(+) (TC 2.A.33) antiporter family.

The protein resides in the cell inner membrane. It carries out the reaction Na(+)(in) + 2 H(+)(out) = Na(+)(out) + 2 H(+)(in). In terms of biological role, na(+)/H(+) antiporter that extrudes sodium in exchange for external protons. This Vibrio campbellii (strain ATCC BAA-1116) protein is Na(+)/H(+) antiporter NhaA.